Here is a 452-residue protein sequence, read N- to C-terminus: Exodeoxyribonuclease 7 large subunit (452 aa).

It belongs to the XseA family. As to quaternary structure, heterooligomer composed of large and small subunits.

It is found in the cytoplasm. The enzyme catalyses Exonucleolytic cleavage in either 5'- to 3'- or 3'- to 5'-direction to yield nucleoside 5'-phosphates.. In terms of biological role, bidirectionally degrades single-stranded DNA into large acid-insoluble oligonucleotides, which are then degraded further into small acid-soluble oligonucleotides. The chain is Exodeoxyribonuclease 7 large subunit from Bordetella avium (strain 197N).